Reading from the N-terminus, the 727-residue chain is Cyclin-T1 (727 aa).

Ser-117 is modified (phosphoserine). The Nuclear localization signal, and interaction with Tat-TAR RNA motif lies at 253–270 (KRIRNWRACQAAKKTKAD). Low complexity predominate over residues 302–322 (MSTSSTTSTVPSLPTTEESSS). A disordered region spans residues 302-326 (MSTSSTTSTVPSLPTTEESSSNLSG). A Glycyl lysine isopeptide (Lys-Gly) (interchain with G-Cter in SUMO2) cross-link involves residue Lys-343. Residues 386–427 (SAKVSLKEYRAKHAEELAAQKRQLENMEANVKSQYAYAAQNL) adopt a coiled-coil conformation. Position 390 is a phosphoserine (Ser-390). Lys-392 is subject to N6-acetyllysine. Lys-417 is covalently cross-linked (Glycyl lysine isopeptide (Lys-Gly) (interchain with G-Cter in SUMO2)). Residues Ser-418, Ser-476, and Ser-477 each carry the ADP-ribosylserine modification. A histidine-rich domain (HRD) region spans residues 482 to 552 (IKMRIKVHAA…RPGDPKHSSQ (71 aa)). Lys-483 is covalently cross-linked (Glycyl lysine isopeptide (Lys-Gly) (interchain with G-Cter in SUMO2)). Residues 486–508 (IKVHAAPDKHNSIDDSVTKSREH) are compositionally biased toward basic and acidic residues. Disordered stretches follow at residues 486–591 (IKVH…DHPA) and 692–727 (LNPR…PLPK). Lys-487 is subject to N6-(ADP-ribosyl)lysine. Position 489 is an ADP-ribosylhistidine (His-489). A phosphoserine mark is found at Ser-497 and Ser-501. Residues 509–532 (KEKHKTHPSNHHHHHNHHSHKHSH) show a composition bias toward basic residues. At His-532 the chain carries ADP-ribosylhistidine. ADP-ribosylserine occurs at positions 533, 551, and 554. His-558 carries the post-translational modification ADP-ribosylhistidine. The span at 562 to 572 (SLSSSFSSSSS) shows a compositional bias: low complexity. Ser-565 carries the post-translational modification ADP-ribosylserine. Ser-566 carries the post-translational modification Phosphoserine. Pro residues predominate over residues 711–727 (LPPLPSEPPPPLPPLPK).

This sequence belongs to the cyclin family. Cyclin C subfamily. Cyclin-T1 is the predominant cyclin that associates with CDK9 to form a heterodimer called P-TEFb. P-TEFb forms a complex with AFF4/AF5Q31. Component of a complex which is at least composed of HTATSF1/Tat-SF1, P-TEFb complex, RNA pol II, SUPT5H, and NCL/nucleolin. Component of the 7SK snRNP complex at least composed of P-TEFb (composed of CDK9 and CCNT1/cyclin-T1), HEXIM1, HEXIM2, BCDIN3, SART3 proteins and 7SK and U6 snRNAs. Interacts (via central region) with ZMYND8 (via N-terminus); the interaction is direct and the association appears to occur between homodimeric ZMYND8 and the activated form of the P-TEFb complex. Interacts with BRD4, targets chromatin binding. Interacts with JMJD6. Interacts with MDFIC. Interacts with HSF1. Interacts with HTATSF1. Interacts with TBX21. Post-translationally, ADP-ribosylation on serine residues by PARP1 in response to DNA damage disrupts the phase separation activity of CCNT1, thereby preventing activation of CDK9.

Its subcellular location is the nucleus. Functionally, regulatory subunit of the cyclin-dependent kinase pair (CDK9/cyclin-T1) complex, also called positive transcription elongation factor B (P-TEFb), which facilitates the transition from abortive to productive elongation by phosphorylating the CTD (C-terminal domain) of the large subunit of RNA polymerase II (RNA Pol II). Required to activate the protein kinase activity of CDK9: acts by mediating formation of liquid-liquid phase separation (LLPS) that enhances binding of P-TEFb to the CTD of RNA Pol II. The polypeptide is Cyclin-T1 (CCNT1) (Equus caballus (Horse)).